The primary structure comprises 208 residues: ATP phosphoribosyltransferase (208 aa).

This sequence belongs to the ATP phosphoribosyltransferase family. Short subfamily. Heteromultimer composed of HisG and HisZ subunits.

It localises to the cytoplasm. It catalyses the reaction 1-(5-phospho-beta-D-ribosyl)-ATP + diphosphate = 5-phospho-alpha-D-ribose 1-diphosphate + ATP. It functions in the pathway amino-acid biosynthesis; L-histidine biosynthesis; L-histidine from 5-phospho-alpha-D-ribose 1-diphosphate: step 1/9. Catalyzes the condensation of ATP and 5-phosphoribose 1-diphosphate to form N'-(5'-phosphoribosyl)-ATP (PR-ATP). Has a crucial role in the pathway because the rate of histidine biosynthesis seems to be controlled primarily by regulation of HisG enzymatic activity. The chain is ATP phosphoribosyltransferase (hisG) from Thermotoga maritima (strain ATCC 43589 / DSM 3109 / JCM 10099 / NBRC 100826 / MSB8).